Consider the following 685-residue polypeptide: Protein argonaute (685 aa).

The N-terminal domain stretch occupies residues 1–99 (MNHLGKTEVF…LYPKGRRPLD (99 aa)). A linker L1 region spans residues 100–176 (PKDPGERSVL…VDPAYRILCE (77 aa)). One can recognise a PAZ domain in the interval 169–265 (PAYRILCEMS…HLTGLLVPVL (97 aa)). The tract at residues 272 to 337 (EEEGSLALSL…SKPADALRVG (66 aa)) is linker L2. The mid domain stretch occupies residues 338–463 (FYRAQETALA…LLAKAGLQVV (126 aa)). The segment at 464–685 (ALSGAYPAEL…EVDREKLFFV (222 aa)) is PIWI domain. Catalysis depends on residues Asp478, Glu512, Asp546, and Asp660. Asp478 lines the Mn(2+) pocket. Residues 507-671 (EAQAGERIPQ…LVKEVGRLGI (165 aa)) enclose the Piwi domain. Mn(2+) is bound by residues Asp546, Asp660, and Val685.

The protein belongs to the argonaute family. Long pAgo subfamily. As to quaternary structure, coimmunoprecipitates with a number of proteins involved in DNA replication or recombination including RepA (initiates replication), AddA/B (TT_C0638 and TT_C0639), ArgR, GyrA/B, HU (TT_C0984), PriA, Rad52 (TT_C1923), RecJ, SSB, TopA and UvrB. Most proteins remain associated with TtAgo after DNase treatment and associate with catalytically inactive protein. Mn(2+) serves as cofactor.

Its function is as follows. A DNA-guided ssDNA endonuclease. Uses short ssDNA sequences as guides (gDNA, also called small interfering DNA, siDNA) to bind complementary DNA target strands, resulting in cleavage of the target DNA (tDNA). The cleavage site is 10 nucleotides (nt) downstream of the target residue base-paired with the 5'-end of the gDNA. Plays a role in completion of DNA replication, participates in decatenating replicated DNA and plasmid. In situ purifies with 5'-phosphorylated long DNA (about 1160 nt, maps to the whole chromosome and plasmid), 25-35 nt RNAs that map to the whole chromosome and 15-18 nt DNA that maps to the replication terminus region (ter) on the chromosome and plasmid. Most short DNA starts with dC. Has been shown to have guide sequence-independent dsDNase activity called 'chopping', which requires unstable DNA (high AT-content, multiple mismatches or low salt conditions), and could be used to generate gDNA. Preferentially binds tDNA with dC at its 3'-terminus. Has also been shown to have no detectable guide sequence-independent dsDNase activity. The latter study proposes TtAgo may acquire gDNA from nicked dsDNA, by binding to 5'-phosphorylated-dC nicks, then cleaving 10 nt away on the opposite strand; subsequently an exonuclease (maybe AddA-AddB helicase/nuclease) trims the ends to generate the gDNA. In terms of biological role, involved in defense against invading mobile genetic elements. TtAgo interferes with plasmid DNA, stimulates expression of specific endogenous genes, including various CRISPR loci and at least part of the CRISPR adaptation machinery, but only when exogenous plasmid DNA is present. Upon purification from E.coli associates with gDNA 13-25 nt long with 5'-phosphorylated ends and with 10-150 nt RNA with 5'-OH. DNA corresponds to the expression plasmid rather than chromosomal DNA; 89% of gDNA starts with dC and 72% has dA in the second position. Endonucleolytically cleaves tDNA with 5'-phosphorylated gDNA but not 5'-phosphorylated gRNA; the active site is involved in processing or binding of ssDNA. Nicks or linearizes supercoiled plasmid target when it has the appropriate gDNA sequences, does not cleave linear tDNA. Positions 4 to 16 of the tDNA need to be base paired to the gDNA for efficient tDNA cleavage. Although the system can support single nucleotide insertions in either the gDNA or tDNA, in all cases cleavage activity is reduced, with a wide range of sequence- and position-specific effects. First characterized as a DNA-guided RNA endonuclease. Uses gDNA to bind complementary RNA target strands, resulting in cleavage of the target RNA. The cleavage site is 10 nucleotides (nt) downstream of the target residue base-paired with the 5'-end of the guide DNA. The chain is Protein argonaute from Thermus thermophilus (strain ATCC BAA-163 / DSM 7039 / HB27).